Consider the following 1449-residue polypeptide: Gag-Pol polyprotein (1449 aa).

Glycine 2 carries the N-myristoyl glycine; by host lipid modification. A Nuclear export signal motif is present at residues 16-22 (LEKVRLR). The Nuclear localization signal motif lies at 26–32 (KKKYMLK). A disordered region spans residues 215 to 237 (DLQHPQPGPLPAGQLREPRGSDI). CCHC-type zinc fingers lie at residues 392 to 409 (IKCW…QCRA) and 413 to 430 (QGCW…KCPE). The segment at 442–494 (GKEAPQFPHGPDASGADTNCSPRGSSCGSTEELHEDGQKAEGEQRETLQGGDR) is disordered. A compositionally biased stretch (polar residues) spans 457–470 (ADTNCSPRGSSCGS). Basic and acidic residues predominate over residues 472-487 (EELHEDGQKAEGEQRE). The region spanning 518–587 (VEVLLDTGAD…TPINIFGRNL (70 aa)) is the Peptidase A2 domain. The For protease activity; shared with dimeric partner role is filled by aspartate 523. The Reverse transcriptase domain occupies 641 to 831 (DGQLEEAPPT…PPFQWMGYEL (191 aa)). The Mg(2+) site is built by aspartate 707, aspartate 782, and aspartate 783. The tract at residues 824 to 832 (FQWMGYELW) is RT 'primer grip'. The short motif at 994–1010 (WEQWWTDYWQVTWIPDW) is the Tryptophan repeat motif element. Residues 1030–1153 (IQGAETFYVD…VDHLVSQGIR (124 aa)) form the RNase H type-1 domain. The Mg(2+) site is built by aspartate 1039, glutamate 1074, aspartate 1094, and aspartate 1145. The Integrase-type zinc-finger motif lies at 1159-1200 (KKIEPAQEEHEKYHSNVKELVFKFGLPRLVAKQIVDTCDKCH). Zn(2+)-binding residues include histidine 1168, histidine 1172, cysteine 1196, and cysteine 1199. The Integrase catalytic domain maps to 1210-1360 (VNAELGTWQM…TPAERLVNMI (151 aa)). Aspartate 1220 and aspartate 1272 together coordinate Mg(2+). Residues 1379–1426 (FRVYYREGRDQLWKGPGELLWKGEGAVILKVGTEIKVVPRRKAKIIKD) constitute a DNA-binding region (integrase-type).

In terms of assembly, homotrimer. Interacts with gp41 (via C-terminus). Homodimer. The active site consists of two apposed aspartic acid residues. As to quaternary structure, heterodimer of p66 RT and p51 RT (RT p66/p51). Heterodimerization of RT is essential for DNA polymerase activity. Despite the sequence identities, p66 RT and p51 RT have distinct folding. In terms of assembly, homotetramer; may further associate as a homohexadecamer. Requires Mg(2+) as cofactor. Specific enzymatic cleavages by the viral protease yield mature proteins. The protease is released by autocatalytic cleavage. The polyprotein is cleaved during and after budding, this process is termed maturation. Proteolytic cleavage of p66 RT removes the RNase H domain to yield the p51 RT subunit. In terms of processing, capsid protein p24 is phosphorylated.

The protein localises to the virion. It is found in the host nucleus. Its subcellular location is the host cytoplasm. It localises to the host cell membrane. It carries out the reaction Specific for a P1 residue that is hydrophobic, and P1' variable, but often Pro.. The catalysed reaction is Endohydrolysis of RNA in RNA/DNA hybrids. Three different cleavage modes: 1. sequence-specific internal cleavage of RNA. Human immunodeficiency virus type 1 and Moloney murine leukemia virus enzymes prefer to cleave the RNA strand one nucleotide away from the RNA-DNA junction. 2. RNA 5'-end directed cleavage 13-19 nucleotides from the RNA end. 3. DNA 3'-end directed cleavage 15-20 nucleotides away from the primer terminus.. It catalyses the reaction 3'-end directed exonucleolytic cleavage of viral RNA-DNA hybrid.. The enzyme catalyses DNA(n) + a 2'-deoxyribonucleoside 5'-triphosphate = DNA(n+1) + diphosphate. Its activity is regulated as follows. The viral protease is inhibited by many synthetic protease inhibitors (PIs), such as amprenavir, atazanavir, indinavir, loprinavir, nelfinavir, ritonavir and saquinavir. RT can be inhibited either by nucleoside RT inhibitors (NRTIs) or by non nucleoside RT inhibitors (NNRTIs). NRTIs act as chain terminators, whereas NNRTIs inhibit DNA polymerization by binding a small hydrophobic pocket near the RT active site and inducing an allosteric change in this region. Classical NRTIs are abacavir, adefovir (PMEA), didanosine (ddI), lamivudine (3TC), stavudine (d4T), tenofovir (PMPA), zalcitabine (ddC), and zidovudine (AZT). Classical NNRTIs are atevirdine (BHAP U-87201E), delavirdine, efavirenz (DMP-266), emivirine (I-EBU), and nevirapine (BI-RG-587). The tritherapies used as a basic effective treatment of AIDS associate two NRTIs and one NNRTI. Use of protease inhibitors in tritherapy regimens permit more ambitious therapeutic strategies. In terms of biological role, gag-Pol polyprotein and Gag polyprotein may regulate their own translation, by the binding genomic RNA in the 5'-UTR. At low concentration, Gag-Pol and Gag would promote translation, whereas at high concentration, the polyproteins encapsidate genomic RNA and then shut off translation. Matrix protein p17 has two main functions: in infected cell, it targets Gag and Gag-pol polyproteins to the plasma membrane via a multipartite membrane-binding signal, that includes its myristointegration complex. The myristoylation signal and the NLS exert conflicting influences its subcellular localization. The key regulation of these motifs might be phosphorylation of a portion of MA molecules on the C-terminal tyrosine at the time of virus maturation, by virion-associated cellular tyrosine kinase. Implicated in the release from host cell mediated by Vpu. Its function is as follows. Capsid protein p24 forms the conical core that encapsulates the genomic RNA-nucleocapsid complex in the virion. The core is constituted by capsid protein hexamer subunits. The core is disassembled soon after virion entry. Interaction with host PPIA/CYPA protects the virus from restriction by host TRIM5-alpha and from an unknown antiviral activity in host cells. This capsid restriction by TRIM5 is one of the factors which restricts SIV to the simian species. Functionally, nucleocapsid protein p7 encapsulates and protects viral dimeric unspliced (genomic) RNA. Binds these RNAs through its zinc fingers. Facilitates rearangement of nucleic acid secondary structure during retrotranscription of genomic RNA. This capability is referred to as nucleic acid chaperone activity. In terms of biological role, the aspartyl protease mediates proteolytic cleavages of Gag and Gag-Pol polyproteins during or shortly after the release of the virion from the plasma membrane. Cleavages take place as an ordered, step-wise cascade to yield mature proteins. This process is called maturation. Displays maximal activity during the budding process just prior to particle release from the cell. Also cleaves Nef and Vif, probably concomitantly with viral structural proteins on maturation of virus particles. Hydrolyzes host EIF4GI and PABP1 in order to shut off the capped cellular mRNA translation. The resulting inhibition of cellular protein synthesis serves to ensure maximal viral gene expression and to evade host immune response. Reverse transcriptase/ribonuclease H (RT) is a multifunctional enzyme that converts the viral dimeric RNA genome into dsDNA in the cytoplasm, shortly after virus entry into the cell. This enzyme displays a DNA polymerase activity that can copy either DNA or RNA templates, and a ribonuclease H (RNase H) activity that cleaves the RNA strand of RNA-DNA heteroduplexes in a partially processive 3' to 5' endonucleasic mode. Conversion of viral genomic RNA into dsDNA requires many steps. A tRNA binds to the primer-binding site (PBS) situated at the 5'-end of the viral RNA. RT uses the 3' end of the tRNA primer to perform a short round of RNA-dependent minus-strand DNA synthesis. The reading proceeds through the U5 region and ends after the repeated (R) region which is present at both ends of viral RNA. The portion of the RNA-DNA heteroduplex is digested by the RNase H, resulting in a ssDNA product attached to the tRNA primer. This ssDNA/tRNA hybridizes with the identical R region situated at the 3' end of viral RNA. This template exchange, known as minus-strand DNA strong stop transfer, can be either intra- or intermolecular. RT uses the 3' end of this newly synthesized short ssDNA to perform the RNA-dependent minus-strand DNA synthesis of the whole template. RNase H digests the RNA template except for two polypurine tracts (PPTs) situated at the 5'-end and near the center of the genome. It is not clear if both polymerase and RNase H activities are simultaneous. RNase H can probably proceed both in a polymerase-dependent (RNA cut into small fragments by the same RT performing DNA synthesis) and a polymerase-independent mode (cleavage of remaining RNA fragments by free RTs). Secondly, RT performs DNA-directed plus-strand DNA synthesis using the PPTs that have not been removed by RNase H as primers. PPTs and tRNA primers are then removed by RNase H. The 3' and 5' ssDNA PBS regions hybridize to form a circular dsDNA intermediate. Strand displacement synthesis by RT to the PBS and PPT ends produces a blunt ended, linear dsDNA copy of the viral genome that includes long terminal repeats (LTRs) at both ends. Its function is as follows. Integrase catalyzes viral DNA integration into the host chromosome, by performing a series of DNA cutting and joining reactions. This enzyme activity takes place after virion entry into a cell and reverse transcription of the RNA genome in dsDNA. The first step in the integration process is 3' processing. This step requires a complex comprising the viral genome, matrix protein, Vpr and integrase. This complex is called the pre-integration complex (PIC). The integrase protein removes 2 nucleotides from each 3' end of the viral DNA, leaving recessed CA OH's at the 3' ends. In the second step, the PIC enters cell nucleus. This process is mediated through integrase and Vpr proteins, and allows the virus to infect a non dividing cell. This ability to enter the nucleus is specific of lentiviruses, other retroviruses cannot and rely on cell division to access cell chromosomes. In the third step, termed strand transfer, the integrase protein joins the previously processed 3' ends to the 5' ends of strands of target cellular DNA at the site of integration. The 5'-ends are produced by integrase-catalyzed staggered cuts, 5 bp apart. A Y-shaped, gapped, recombination intermediate results, with the 5'-ends of the viral DNA strands and the 3' ends of target DNA strands remaining unjoined, flanking a gap of 5 bp. The last step is viral DNA integration into host chromosome. This involves host DNA repair synthesis in which the 5 bp gaps between the unjoined strands are filled in and then ligated. Since this process occurs at both cuts flanking the SIV genome, a 5 bp duplication of host DNA is produced at the ends of SIV integration. Alternatively, Integrase may catalyze the excision of viral DNA just after strand transfer, this is termed disintegration. In Cercopithecidae (Old World monkeys), this protein is Gag-Pol polyprotein (gag-pol).